We begin with the raw amino-acid sequence, 81 residues long: Photosystem I iron-sulfur center (81 aa).

2 consecutive 4Fe-4S ferredoxin-type domains span residues 1-31 (MSHS…MVPW) and 39-68 (IASS…IRVY). The [4Fe-4S] cluster site is built by cysteine 11, cysteine 14, cysteine 17, cysteine 21, cysteine 48, cysteine 51, cysteine 54, and cysteine 58.

In terms of assembly, the cyanobacterial PSI reaction center is composed of one copy each of PsaA,B,C,D,E,F,I,J,K,L,M and X, and forms trimeric complexes. The cofactor is [4Fe-4S] cluster.

It localises to the cellular thylakoid membrane. It carries out the reaction reduced [plastocyanin] + hnu + oxidized [2Fe-2S]-[ferredoxin] = oxidized [plastocyanin] + reduced [2Fe-2S]-[ferredoxin]. Its function is as follows. Apoprotein for the two 4Fe-4S centers FA and FB of photosystem I (PSI); essential for photochemical activity. FB is the terminal electron acceptor of PSI, donating electrons to ferredoxin. The C-terminus interacts with PsaA/B/D and helps assemble the protein into the PSI complex. Required for binding of PsaD and PsaE to PSI. PSI is a plastocyanin/cytochrome c6-ferredoxin oxidoreductase, converting photonic excitation into a charge separation, which transfers an electron from the donor P700 chlorophyll pair to the spectroscopically characterized acceptors A0, A1, FX, FA and FB in turn. In Microcystis aeruginosa (strain NIES-843 / IAM M-2473), this protein is Photosystem I iron-sulfur center.